The following is a 180-amino-acid chain: ATP synthase subunit delta (180 aa).

Belongs to the ATPase delta chain family. In terms of assembly, F-type ATPases have 2 components, F(1) - the catalytic core - and F(0) - the membrane proton channel. F(1) has five subunits: alpha(3), beta(3), gamma(1), delta(1), epsilon(1). F(0) has three main subunits: a(1), b(2) and c(10-14). The alpha and beta chains form an alternating ring which encloses part of the gamma chain. F(1) is attached to F(0) by a central stalk formed by the gamma and epsilon chains, while a peripheral stalk is formed by the delta and b chains.

The protein localises to the cell membrane. Its function is as follows. F(1)F(0) ATP synthase produces ATP from ADP in the presence of a proton or sodium gradient. F-type ATPases consist of two structural domains, F(1) containing the extramembraneous catalytic core and F(0) containing the membrane proton channel, linked together by a central stalk and a peripheral stalk. During catalysis, ATP synthesis in the catalytic domain of F(1) is coupled via a rotary mechanism of the central stalk subunits to proton translocation. Functionally, this protein is part of the stalk that links CF(0) to CF(1). It either transmits conformational changes from CF(0) to CF(1) or is implicated in proton conduction. The polypeptide is ATP synthase subunit delta (Dehalococcoides mccartyi (strain ATCC BAA-2266 / KCTC 15142 / 195) (Dehalococcoides ethenogenes (strain 195))).